Reading from the N-terminus, the 2628-residue chain is Hemagglutinin A (2628 aa).

Residues 1–24 (MRKLNSLFSLAVLLSLLCWGQTAA) form the signal peptide. Peptidase C25-like regions lie at residues 25–539 (AQGG…TPPP), 540–995 (GGTS…TPPP), 996–1451 (GGTS…TPPP), 1452–1907 (GGTS…TPPP), and 2074–2628 (IDAD…LAVK). Disordered stretches follow at residues 493–512 (WDAPNGTPNPNPGTTTLSES), 520–546 (SWKTIDADGDGNNWTTTPPPGGTSFAG), 944–1002 (KWDA…SFAG), 1400–1458 (KWDA…SFAG), 1856–1881 (KWDAPNGTPNPNPNPNPGTTTLSESF), 1890–1909 (KTIDADGDGNNWTTTPPPGG), and 2336–2358 (SSWKTIDADGDGNNWTTTPPPGG). A compositionally biased stretch (low complexity) spans 496–508 (PNGTPNPNPGTTT).

It belongs to the peptidase C25 family.

In terms of biological role, agglutinates erythrocytes. The protein is Hemagglutinin A (hagA) of Porphyromonas gingivalis (Bacteroides gingivalis).